We begin with the raw amino-acid sequence, 177 residues long: Nucleoside triphosphate/diphosphate phosphatase (177 aa).

The active-site Proton donor is arginine 23. Mg(2+)-binding residues include asparagine 87, aspartate 103, aspartate 105, aspartate 107, aspartate 120, and glutamate 123.

Belongs to the Ntdp family. The cofactor is Mg(2+).

The catalysed reaction is a ribonucleoside 5'-triphosphate + H2O = a ribonucleoside 5'-diphosphate + phosphate + H(+). It catalyses the reaction a ribonucleoside 5'-diphosphate + H2O = a ribonucleoside 5'-phosphate + phosphate + H(+). In terms of biological role, has nucleoside phosphatase activity towards nucleoside triphosphates and nucleoside diphosphates. The sequence is that of Nucleoside triphosphate/diphosphate phosphatase from Streptococcus uberis (strain ATCC BAA-854 / 0140J).